A 457-amino-acid chain; its full sequence is Nuclear hormone receptor family member odr-7 (457 aa).

Disordered stretches follow at residues 57-95 and 230-252; these read EQPN…DNDA and KQES…LQQP. A DNA-binding region (nuclear receptor) is located at residues 327–407; the sequence is LHDCQVCLST…IGMLPENVQH (81 aa). NR C4-type zinc fingers lie at residues 330–351 and 367–395; these read CQVC…CAAC and CKRN…MKRC. Residues 435–457 are disordered; sequence QPSGSAAQPITVSSSESPRHTTN.

Belongs to the nuclear hormone receptor family. NR0 subfamily. Heterodimer with a partner that confers DNA binding capacity or a nuclear hormone receptor whose DNA binding it inhibits. Expressed predominantly in the AWA neurons.

The protein resides in the nucleus. It is found in the cytoplasm. It localises to the perinuclear region. Required for the function of one pair of chemosensory neurons called AWA neurons that are involved in chemotaxis to volatile odorants. Acts in a pathway that specifies olfactory neuronal fate. Regulates the transcription of olfactory signaling molecules such as odr-10 that specify AWA neuron identity and function. Represses the expression in AWA neurons of factors such as str-2 which specify AWC neuron identity. In Caenorhabditis elegans, this protein is Nuclear hormone receptor family member odr-7 (odr-7).